The chain runs to 523 residues: uncharacterized protein (523 aa).

In terms of domain architecture, Radical SAM core spans 193–447 (RKCSGCGNCR…ALKRRMIGKR (255 aa)). C212, C220, and C223 together coordinate [4Fe-4S] cluster.

[4Fe-4S] cluster serves as cofactor.

This is an uncharacterized protein from Methanopyrus kandleri (strain AV19 / DSM 6324 / JCM 9639 / NBRC 100938).